Reading from the N-terminus, the 322-residue chain is Transaldolase (322 aa).

Lysine 136 (schiff-base intermediate with substrate) is an active-site residue.

It belongs to the transaldolase family. Type 1 subfamily. In terms of assembly, homodimer.

The protein resides in the cytoplasm. It carries out the reaction D-sedoheptulose 7-phosphate + D-glyceraldehyde 3-phosphate = D-erythrose 4-phosphate + beta-D-fructose 6-phosphate. It functions in the pathway carbohydrate degradation; pentose phosphate pathway; D-glyceraldehyde 3-phosphate and beta-D-fructose 6-phosphate from D-ribose 5-phosphate and D-xylulose 5-phosphate (non-oxidative stage): step 2/3. In terms of biological role, transaldolase is important for the balance of metabolites in the pentose-phosphate pathway. This chain is Transaldolase, found in Xanthomonas oryzae pv. oryzae (strain PXO99A).